The following is a 490-amino-acid chain: Membrane-bound lytic murein transglycosylase F (490 aa).

Positions 1-32 are cleaved as a signal peptide; the sequence is MFALTAYRLRCAAWLLATGIFLLLAGCSEAKA. The segment at 33-269 is non-LT domain; it reads PTALERVQKE…RLKDRYYGHV (237 aa). Residues 270-490 form an LT domain region; sequence DVLGYVGAYT…PEEDSGDEKL (221 aa). Glutamate 316 is a catalytic residue. A disordered region spans residues 467-490; the sequence is AESGLHLPGVNKTRPEEDSGDEKL. A compositionally biased stretch (basic and acidic residues) spans 479–490; sequence TRPEEDSGDEKL.

It in the N-terminal section; belongs to the bacterial solute-binding protein 3 family. The protein in the C-terminal section; belongs to the transglycosylase Slt family.

It localises to the cell outer membrane. The catalysed reaction is Exolytic cleavage of the (1-&gt;4)-beta-glycosidic linkage between N-acetylmuramic acid (MurNAc) and N-acetylglucosamine (GlcNAc) residues in peptidoglycan, from either the reducing or the non-reducing ends of the peptidoglycan chains, with concomitant formation of a 1,6-anhydrobond in the MurNAc residue.. In terms of biological role, murein-degrading enzyme that degrades murein glycan strands and insoluble, high-molecular weight murein sacculi, with the concomitant formation of a 1,6-anhydromuramoyl product. Lytic transglycosylases (LTs) play an integral role in the metabolism of the peptidoglycan (PG) sacculus. Their lytic action creates space within the PG sacculus to allow for its expansion as well as for the insertion of various structures such as secretion systems and flagella. This Pseudomonas aeruginosa (strain ATCC 15692 / DSM 22644 / CIP 104116 / JCM 14847 / LMG 12228 / 1C / PRS 101 / PAO1) protein is Membrane-bound lytic murein transglycosylase F.